The chain runs to 117 residues: Large ribosomal subunit protein bL20 (117 aa).

This sequence belongs to the bacterial ribosomal protein bL20 family.

Its function is as follows. Binds directly to 23S ribosomal RNA and is necessary for the in vitro assembly process of the 50S ribosomal subunit. It is not involved in the protein synthesizing functions of that subunit. In Brachyspira hyodysenteriae (strain ATCC 49526 / WA1), this protein is Large ribosomal subunit protein bL20.